Here is an 86-residue protein sequence, read N- to C-terminus: Large ribosomal subunit protein bL27 (86 aa).

The interval 1–24 is disordered; that stretch reads MATKKAGGSSRNGRDSAGRRLGVK.

This sequence belongs to the bacterial ribosomal protein bL27 family.

The chain is Large ribosomal subunit protein bL27 from Rickettsia felis (strain ATCC VR-1525 / URRWXCal2) (Rickettsia azadi).